We begin with the raw amino-acid sequence, 499 residues long: Acetylcholine receptor subunit alpha-type acr-16 (499 aa).

The first 19 residues, 1–19, serve as a signal peptide directing secretion; that stretch reads MSSVCALLLSCALFLVAHG. At 20–232 the chain is on the extracellular side; sequence SLQERRLYED…LHMRRRTLYY (213 aa). N-linked (GlcNAc...) asparagine glycans are attached at residues asparagine 43 and asparagine 93. Intrachain disulfides connect cysteine 147-cysteine 161 and cysteine 211-cysteine 212. 3 helical membrane passes run 233–253, 261–281, and 289–309; these read GFNLIMPCILTTLMTLLGFTL, ITLQITVLLSICFFLSIVSEM, and VPLLGIFFTCCMIVVTASTVF. The Cytoplasmic portion of the chain corresponds to 310 to 473; the sequence is TVYVLNLHYR…WKFAAMVVDR (164 aa). A helical membrane pass occupies residues 474-494; sequence LCLYVFTIFIIASTIGIFWSA. Topologically, residues 495 to 499 are extracellular; sequence PYLVA.

This sequence belongs to the ligand-gated ion channel (TC 1.A.9) family. Acetylcholine receptor (TC 1.A.9.1) subfamily.

It is found in the postsynaptic cell membrane. It localises to the cell membrane. In terms of biological role, after binding acetylcholine, the AChR responds by an extensive change in conformation that affects all subunits and leads to opening of an ion-conducting channel across the plasma membrane. A subunit of the levamisole-insensitive nicotinic receptor. The polypeptide is Acetylcholine receptor subunit alpha-type acr-16 (Caenorhabditis briggsae).